A 270-amino-acid polypeptide reads, in one-letter code: Gap junction beta-3 protein (270 aa).

At 1-20 (MDWKTLQALLSGVNKYSTAF) the chain is on the cytoplasmic side. Residues 21-40 (GRIWLSVVFVFRVLVYVVAA) traverse the membrane as a helical segment. Residues 41 to 75 (ERVWGDEQKDFDCNTKQPGCTNVCYDNYFPISNIR) lie on the Extracellular side of the membrane. Residues 76–98 (LWALQLIFVTCPSLLVILHVAYR) traverse the membrane as a helical segment. The Cytoplasmic segment spans residues 99–126 (EERERRHRQKHGDQCAKLYDNAGKKHGG). The helical transmembrane segment at 127 to 149 (LWWTYLFSLIFKLIIEFLFLYLL) threads the bilayer. Topologically, residues 150-187 (HTLWHGFNMPRLVQCANVAPCPNIVDCYIARPTEKKIF) are extracellular. The chain crosses the membrane as a helical span at residues 188–210 (TYFMVGASAVCIVLTICELCYLI). The Cytoplasmic portion of the chain corresponds to 211–270 (CHRVLRGLHKDKPRGGCSPSSSASRASTCRCHHKLVEAGEVDPDPGNNKLQASAPNLTPI). The interval 250-270 (EVDPDPGNNKLQASAPNLTPI) is disordered. Polar residues predominate over residues 258–270 (NKLQASAPNLTPI).

Belongs to the connexin family. Beta-type (group I) subfamily. As to quaternary structure, a connexon is composed of a hexamer of connexins. Interacts with CNST.

Its subcellular location is the cell membrane. The protein resides in the cell junction. The protein localises to the gap junction. In terms of biological role, one gap junction consists of a cluster of closely packed pairs of transmembrane channels, the connexons, through which materials of low MW diffuse from one cell to a neighboring cell. The protein is Gap junction beta-3 protein (GJB3) of Homo sapiens (Human).